We begin with the raw amino-acid sequence, 512 residues long: DNA-binding protein (512 aa).

Residues 1 to 105 are disordered; it reads MAGRGGSQLE…QDSEDEREAE (105 aa). Basic and acidic residues predominate over residues 9–21; that stretch reads LERRRERTPDRGR. Pro residues predominate over residues 69 to 78; that stretch reads QEQPPPPQQP. Positions 79 to 88 are enriched in basic residues; that stretch reads PKKKPRKTKH. Acidic residues predominate over residues 96–105; the sequence is QDSEDEREAE. A Phosphotyrosine; by host modification is found at Tyr-174. Positions 263 and 265 each coordinate Zn(2+). The flexible loop stretch occupies residues 276-310; sequence IEMDVASENGQRALKENPDRAKVTQNRWGRSVVQL. Zn(2+) is bound by residues Cys-318, Cys-334, Cys-376, Cys-378, Cys-430, and Cys-447. Residues 495–512 are C-terminal arm, DBP binding; it reads VSLPAGHAETSRQNPFDF.

This sequence belongs to the adenoviridae E2A DNA-binding protein family. In terms of assembly, homomultimerizes on viral ssDNA bound to pTP. Forms a initiation complex with viral polymerase, pTP and hosts NFIA and POU2F1/OCT1. Interacts with host SRCAP.

The protein resides in the host nucleus. Plays a role in the elongation phase of viral strand displacement replication by unwinding the template in an ATP-independent fashion, employing its capacity to form multimers. Also enhances the rate of initiation. Released from template upon second strand synthesis. Assembles in complex with viral pTP, viral pol, host NFIA and host POU2F1/OCT1 on viral origin of replication. Covers the whole ssDNA genome during synthesis. The complementary strand synthesis induces its relese from DNA template. May inhibit cellular transcription mediated by the interaction between host SRCAP and CBP. This Homo sapiens (Human) protein is DNA-binding protein.